The chain runs to 166 residues: NAD(P)H-quinone oxidoreductase subunit I, chloroplastic (166 aa).

2 4Fe-4S ferredoxin-type domains span residues 55–84 and 95–124; these read GRIHFEFDKCIACEVCVRVCPIDLPVVDWK and LNYSIDFGICIFCGNCVEYCPTNCLSMTEE. [4Fe-4S] cluster contacts are provided by Cys-64, Cys-67, Cys-70, Cys-74, Cys-104, Cys-107, Cys-110, and Cys-114.

This sequence belongs to the complex I 23 kDa subunit family. In terms of assembly, NDH is composed of at least 16 different subunits, 5 of which are encoded in the nucleus. [4Fe-4S] cluster is required as a cofactor.

It localises to the plastid. The protein localises to the chloroplast thylakoid membrane. The catalysed reaction is a plastoquinone + NADH + (n+1) H(+)(in) = a plastoquinol + NAD(+) + n H(+)(out). The enzyme catalyses a plastoquinone + NADPH + (n+1) H(+)(in) = a plastoquinol + NADP(+) + n H(+)(out). Its function is as follows. NDH shuttles electrons from NAD(P)H:plastoquinone, via FMN and iron-sulfur (Fe-S) centers, to quinones in the photosynthetic chain and possibly in a chloroplast respiratory chain. The immediate electron acceptor for the enzyme in this species is believed to be plastoquinone. Couples the redox reaction to proton translocation, and thus conserves the redox energy in a proton gradient. This Palafoxia arida (Spanish needles) protein is NAD(P)H-quinone oxidoreductase subunit I, chloroplastic.